Here is a 192-residue protein sequence, read N- to C-terminus: Ion-translocating oxidoreductase complex subunit A (192 aa).

6 helical membrane-spanning segments follow: residues 5-25 (ILLI…FLGL), 39-59 (IGMS…AYLI), 63-83 (ILTP…VIAV), 102-122 (LLGI…VALL), 134-154 (VIYG…FAAL), and 171-191 (SIAL…TGLV).

The protein belongs to the NqrDE/RnfAE family. The complex is composed of six subunits: RnfA, RnfB, RnfC, RnfD, RnfE and RnfG.

The protein resides in the cell inner membrane. Its function is as follows. Part of a membrane-bound complex that couples electron transfer with translocation of ions across the membrane. The polypeptide is Ion-translocating oxidoreductase complex subunit A (Pasteurella multocida (strain Pm70)).